The sequence spans 131 residues: Large ribosomal subunit protein bL17 (131 aa).

This sequence belongs to the bacterial ribosomal protein bL17 family. As to quaternary structure, part of the 50S ribosomal subunit. Contacts protein L32.

This chain is Large ribosomal subunit protein bL17, found in Azoarcus sp. (strain BH72).